Reading from the N-terminus, the 664-residue chain is DNA ligase (664 aa).

NAD(+) is bound by residues 32-36 (DKEYD) and 80-81 (SL). Lys-122 acts as the N6-AMP-lysine intermediate in catalysis. NAD(+)-binding residues include Arg-144, Glu-178, and Lys-314. Residues Cys-407, Cys-410, Cys-423, and Cys-429 each contribute to the Zn(2+) site. The BRCT domain maps to 587-664 (IDENPFMGKT…NEEEFSNKIK (78 aa)).

It belongs to the NAD-dependent DNA ligase family. LigA subfamily. The cofactor is Mg(2+). Mn(2+) serves as cofactor.

It catalyses the reaction NAD(+) + (deoxyribonucleotide)n-3'-hydroxyl + 5'-phospho-(deoxyribonucleotide)m = (deoxyribonucleotide)n+m + AMP + beta-nicotinamide D-nucleotide.. Functionally, DNA ligase that catalyzes the formation of phosphodiester linkages between 5'-phosphoryl and 3'-hydroxyl groups in double-stranded DNA using NAD as a coenzyme and as the energy source for the reaction. It is essential for DNA replication and repair of damaged DNA. The polypeptide is DNA ligase (Clostridium botulinum (strain Kyoto / Type A2)).